Reading from the N-terminus, the 314-residue chain is 2,3-dihydroxyphenylpropionate/2,3-dihydroxicinnamic acid 1,2-dioxygenase 2 (314 aa).

His115 acts as the Proton donor in catalysis. His179 (proton acceptor) is an active-site residue.

This sequence belongs to the LigB/MhpB extradiol dioxygenase family. Homotetramer. Fe(2+) serves as cofactor.

The enzyme catalyses 3-(2,3-dihydroxyphenyl)propanoate + O2 = (2Z,4E)-2-hydroxy-6-oxonona-2,4-dienedioate + H(+). It carries out the reaction (2E)-3-(2,3-dihydroxyphenyl)prop-2-enoate + O2 = (2Z,4E,7E)-2-hydroxy-6-oxonona-2,4,7-trienedioate + H(+). It functions in the pathway aromatic compound metabolism; 3-phenylpropanoate degradation. Catalyzes the non-heme iron(II)-dependent oxidative cleavage of 2,3-dihydroxyphenylpropionic acid and 2,3-dihydroxicinnamic acid into 2-hydroxy-6-ketononadienedioate and 2-hydroxy-6-ketononatrienedioate, respectively. The chain is 2,3-dihydroxyphenylpropionate/2,3-dihydroxicinnamic acid 1,2-dioxygenase 2 (mhpB2) from Pseudomonas putida (Arthrobacter siderocapsulatus).